The chain runs to 992 residues: Disks large-associated protein 4 (992 aa).

A compositionally biased stretch (basic and acidic residues) spans 1–20; sequence MKGLGDSRPRHLSDSLDPPH. Disordered regions lie at residues 1-30, 47-66, and 157-206; these read MKGL…TDRN, PGQN…QLPP, and LEGT…GWWS. Over residues 162-171 the composition is skewed to gly residues; the sequence is GKVGGNGSKK. The segment covering 172–194 has biased composition (basic and acidic residues); the sequence is GGMEDGKGRRAKSKERAKAGEPK. A phosphoserine mark is found at serine 206 and serine 207. At arginine 291 the chain carries Omega-N-methylarginine. The segment at 342 to 396 is disordered; the sequence is STTLLSPRETDAAAEGPIPCRRMRSGSYIKAMGDEDSDESGGSPKPSPKTAARRQ. A phosphoserine mark is found at serine 378, serine 381, serine 388, serine 405, serine 415, and serine 421. Disordered regions lie at residues 527 to 751, 763 to 798, and 915 to 992; these read SVSL…GPRQ, SYGD…AQPG, and TPEK…QTRL. Positions 528 to 554 are enriched in low complexity; the sequence is VSLQSLSPPPSTGSLSNSRTLPSSSCL. Residues 576–591 show a composition bias toward polar residues; the sequence is VTVQSSTESAQDTYLD. Residues serine 580, serine 581, serine 609, serine 611, serine 665, and serine 744 each carry the phosphoserine modification. The span at 600-620 shows a compositional bias: low complexity; the sequence is TSQSGLSNSSDSLDSSTRPPS. Residue threonine 915 is modified to Phosphothreonine. Composition is skewed to basic and acidic residues over residues 915-925 and 940-958; these read TPEKRKEEKKP and VSRD…EARK. The segment covering 969-978 has biased composition (polar residues); sequence VRQNSATESA. Serine 973 is modified (phosphoserine).

This sequence belongs to the SAPAP family. Interacts with DLG1 and DLG4/PSD-95.

It localises to the membrane. In terms of biological role, may play a role in the molecular organization of synapses and neuronal cell signaling. Could be an adapter protein linking ion channel to the subsynaptic cytoskeleton. May induce enrichment of PSD-95/SAP90 at the plasma membrane. This Homo sapiens (Human) protein is Disks large-associated protein 4 (DLGAP4).